We begin with the raw amino-acid sequence, 280 residues long: Putative pyruvate, phosphate dikinase regulatory protein (280 aa).

158–165 (GVSRTSKT) lines the ADP pocket.

It belongs to the pyruvate, phosphate/water dikinase regulatory protein family. PDRP subfamily.

It catalyses the reaction N(tele)-phospho-L-histidyl/L-threonyl-[pyruvate, phosphate dikinase] + ADP = N(tele)-phospho-L-histidyl/O-phospho-L-threonyl-[pyruvate, phosphate dikinase] + AMP + H(+). The catalysed reaction is N(tele)-phospho-L-histidyl/O-phospho-L-threonyl-[pyruvate, phosphate dikinase] + phosphate + H(+) = N(tele)-phospho-L-histidyl/L-threonyl-[pyruvate, phosphate dikinase] + diphosphate. Functionally, bifunctional serine/threonine kinase and phosphorylase involved in the regulation of the pyruvate, phosphate dikinase (PPDK) by catalyzing its phosphorylation/dephosphorylation. The sequence is that of Putative pyruvate, phosphate dikinase regulatory protein from Lactobacillus gasseri (strain ATCC 33323 / DSM 20243 / BCRC 14619 / CIP 102991 / JCM 1131 / KCTC 3163 / NCIMB 11718 / NCTC 13722 / AM63).